Here is a 156-residue protein sequence, read N- to C-terminus: Ribosomal RNA large subunit methyltransferase H (156 aa).

S-adenosyl-L-methionine is bound by residues leucine 73, glycine 104, and 123–128 (LSPLTL).

Belongs to the RNA methyltransferase RlmH family. In terms of assembly, homodimer.

It is found in the cytoplasm. The catalysed reaction is pseudouridine(1915) in 23S rRNA + S-adenosyl-L-methionine = N(3)-methylpseudouridine(1915) in 23S rRNA + S-adenosyl-L-homocysteine + H(+). Its function is as follows. Specifically methylates the pseudouridine at position 1915 (m3Psi1915) in 23S rRNA. The protein is Ribosomal RNA large subunit methyltransferase H of Pseudoalteromonas atlantica (strain T6c / ATCC BAA-1087).